The chain runs to 302 residues: Homoserine O-acetyltransferase (302 aa).

The active-site Acyl-thioester intermediate is the C142. Substrate contacts are provided by K163 and S192. Residue H235 is the Proton acceptor of the active site. Residue E237 is part of the active site. R249 contacts substrate.

This sequence belongs to the MetA family.

It localises to the cytoplasm. The enzyme catalyses L-homoserine + acetyl-CoA = O-acetyl-L-homoserine + CoA. It participates in amino-acid biosynthesis; L-methionine biosynthesis via de novo pathway; O-acetyl-L-homoserine from L-homoserine: step 1/1. In terms of biological role, transfers an acetyl group from acetyl-CoA to L-homoserine, forming acetyl-L-homoserine. This is Homoserine O-acetyltransferase from Geobacillus kaustophilus.